The following is an 859-amino-acid chain: MWKIRCVCPFEDDDGFTIQCESCEVWQHAVCVNIDANNVPEKYFCEQCQPRPIDADKAHKIQLARLQREEEQSRILSRSRSSNNKRRTSFGKNGASPTHSASPRQGNNTGANGALFSQSTNSSNSGSYRNSVTGATLPNAHAPHSQNRRRRSNHLNNPPEAPITEASNEYVYSFHLEYVPLESNTFSASALEYSKNLDLKNLDESEVLMDGCQVVPISSSKFCCSRFGLVSTCEIPPNTPIMEVKGRVCTQNEYKSDPKNQYNILGAPKPHVFFDSNSQLVVDSRVAGSKARFARKGCQSNSVVSSVYMNGSNSVPRFILYSTTHIAPETEIIGDWTLDISHPFRQFAPGMSRPSFNMEELELLSEVLSTFLSFNECASQDKKNCVFSRVTKYIKAARRASTANRVSVAKDRLSLTPSSTPSTPSPAESLPQPSNPTSVYAKSLKEFWLDKYRLSILQKWPAVKSLPTESVGIDVVMEPKLQPSVKEKKPTKDLQSPLPSVEEDSSNRDKKTDIADLHTDSKVGIADVLSPISPDAALQSDGPLKKAKEPEESSITPTTPPSFNVGESLSRRSASPLQHPRTSPDMLDKTSPCKRGLGTITTVHKKHGSVDHLPSVKRRRSIANDFHGKPDYNKRSLSIERKPEAFKTKGDRPHKVHPSFHRNSDSKLKLEPSSKEKSGSMFFNTLRTVKDKSHVHDTQRSSDVNFSRQNGTRSHSPSVSPVGFSFDKSPVTTPPLPTAPAPVITSRHALVNNQFPTNNPNILDHKANNGDDISNALNTSRSENKPNSNLVQGSVVKPSNTSASALPTSAPKKLSLSEYRQRRQQNILHQQSKDNQAHGDTARPHTVPAATVSNPSFTR.

The segment at Arg-5–Arg-51 adopts a PHD-type zinc-finger fold. Positions Leu-66–Ile-163 are disordered. The segment covering Ala-95–Ala-111 has biased composition (polar residues). Positions Ser-117 to Ser-131 are enriched in low complexity. Residues Asp-210–Thr-337 form the SET domain. Disordered regions lie at residues Val-408 to Pro-436, Pro-483 to Asp-516, Ser-533 to Pro-592, Ser-621 to Pro-740, and Thr-779 to Arg-859. A compositionally biased stretch (low complexity) spans Ser-414–Pro-431. The residue at position 496 (Ser-496) is a Phosphoserine. Residues Ser-505–Asp-516 show a composition bias toward basic and acidic residues. A phosphoserine mark is found at Ser-533 and Ser-575. Positions Val-565–Pro-576 are enriched in polar residues. Basic and acidic residues-rich tracts occupy residues Phe-626–Pro-653, Arg-662–Ser-678, and Thr-688–Arg-700. Polar residues-rich tracts occupy residues Ser-701–Val-719 and Thr-779–Pro-807. Phosphoserine occurs at positions 714 and 716. Residues Gln-831–Arg-843 show a composition bias toward basic and acidic residues.

This sequence belongs to the class V-like SAM-binding methyltransferase superfamily. Histone-lysine methyltransferase family. SET3 subfamily.

It is found in the nucleus. In terms of biological role, transcriptional regulator that acts via the formation of large multiprotein complexes that modify and/or remodel the chromatin. Required for both gene activation and repression. Part of the Set3C complex, which is required to repress early/middle sporulation genes during meiosis. Required for the transcriptional activation of genes with high activity. The protein is SET domain-containing protein 3 (set3) of Schizosaccharomyces pombe (strain 972 / ATCC 24843) (Fission yeast).